Consider the following 102-residue polypeptide: MIPGEMKIDAGEILLNDGRETVTLEVANTGDRPIQVGSHYHFYETNEALSFERQLAYGFRLDIAAGTAVRFEPGQSRTVQLVALSGKREVYGFAGKVMGALK.

The protein belongs to the urease beta subunit family. In terms of assembly, heterotrimer of UreA (gamma), UreB (beta) and UreC (alpha) subunits. Three heterotrimers associate to form the active enzyme.

The protein resides in the cytoplasm. The enzyme catalyses urea + 2 H2O + H(+) = hydrogencarbonate + 2 NH4(+). The protein operates within nitrogen metabolism; urea degradation; CO(2) and NH(3) from urea (urease route): step 1/1. This chain is Urease subunit beta, found in Methylobacillus flagellatus (strain ATCC 51484 / DSM 6875 / VKM B-1610 / KT).